Consider the following 899-residue polypeptide: MRLRKLLIFIPAAVILLFFLLTDLLSDLFWYASVGYSPVFLTILITSAALFVIGTLLFFAFSYGNVILAARTGAGAFGVEKEIQYLGGIACAVAAGITGLSLSSSWEIILAFLDQTPFHISDPVFGLDISFYIFSLPFYTILIQYLLALFVFTLIISSVMYAAHRAGVRIDEYGVFQYIPGPFPFGLSWKDTVGRFLPQVNCLLFLIFTTLAAFLWLTRYSTLYTSKGTVIGAGYTDVTITIPALTILTVIAFLIGLLFLLNEKIKRSEMIAYGIGGFFIIAILSAGAGFLVQTLIVEPNEFNLERTYLGYNINSTLDGYNLANINARDFPVLYNLTETDIRNNNATISNIRLWDWRPMKTTLEQLQLFRTYYTFNDVDVDRYWLDGNYKQVHISAREMNSYNLPQQAQTWVNRHLVFTHGYGAVMSPVDRITTNGLPEFFVKDIPPSSPFPSLSLDHPQIYYGEGDIPYCITNTRTEEFDYPSGDENIYSLYDGNAGVELSLLPRLVYAIQLGSVELLVSGSLTPDSKLHLYRNILERTSKIAPFLTYDSDPYVVMSDGKLSWIIDAYTTSDRYPYSEPVRTGELSAKSMNYVRNSVKVIVDAYTGDIRYYIVDPDDPVIQTYAKMFPGLFRPVDDIPDDLRSHLRYPHGLFNIQAEIYGIYHMTDPRVFYNREDAWVIPDEIYRKTQQRFEPYYVIMKLPGEEREEFILMLPFTPRNKQNLIGWMAVRCDPDRYGEMIVYQFSKQELTYGPMQIEARIDQDTDISQSITLWSQAGSSVVRGNTLIIPVEQSLLYVEPLYLEATQKGTLPQLQRVIVSYGDKLTMQPTLNEALQVIFGGRQARQDITKRVEQPGDDQSSSILGQISGLYKQAQQALSSGSLGEYQQFVDRIGTLVSGY.

7 consecutive transmembrane segments (helical) span residues 6 to 26, 39 to 59, 93 to 113, 136 to 156, 196 to 216, 240 to 260, and 271 to 291; these read LLIF…DLLS, VFLT…LLFF, VAAG…LAFL, LPFY…TLII, FLPQ…AFLW, ITIP…LLFL, and IAYG…AGFL.

This sequence belongs to the UPF0182 family.

The protein resides in the cell membrane. The protein is UPF0182 protein Mhun_1303 of Methanospirillum hungatei JF-1 (strain ATCC 27890 / DSM 864 / NBRC 100397 / JF-1).